The sequence spans 378 residues: Chorismate synthase (378 aa).

NADP(+) is bound at residue Arg-50. Residues 127–129 (RAS), 255–256 (NA), Gly-300, 315–319 (KPTPS), and Arg-342 each bind FMN.

This sequence belongs to the chorismate synthase family. Requires FMNH2 as cofactor.

It catalyses the reaction 5-O-(1-carboxyvinyl)-3-phosphoshikimate = chorismate + phosphate. It participates in metabolic intermediate biosynthesis; chorismate biosynthesis; chorismate from D-erythrose 4-phosphate and phosphoenolpyruvate: step 7/7. Its function is as follows. Catalyzes the anti-1,4-elimination of the C-3 phosphate and the C-6 proR hydrogen from 5-enolpyruvylshikimate-3-phosphate (EPSP) to yield chorismate, which is the branch point compound that serves as the starting substrate for the three terminal pathways of aromatic amino acid biosynthesis. This reaction introduces a second double bond into the aromatic ring system. The chain is Chorismate synthase from Methanocaldococcus jannaschii (strain ATCC 43067 / DSM 2661 / JAL-1 / JCM 10045 / NBRC 100440) (Methanococcus jannaschii).